A 256-amino-acid chain; its full sequence is Small ribosomal subunit protein eS1 (256 aa).

The residue at position 2 (alanine 2) is an N-acetylalanine; partial.

The protein belongs to the eukaryotic ribosomal protein eS1 family. As to quaternary structure, component of the small ribosomal subunit. Mature ribosomes consist of a small (40S) and a large (60S) subunit. The 40S subunit contains about 33 different proteins and 1 molecule of RNA (18S). The 60S subunit contains about 49 different proteins and 3 molecules of RNA (25S, 5.8S and 5S).

It localises to the cytoplasm. The sequence is that of Small ribosomal subunit protein eS1 from Lentinula edodes (Shiitake mushroom).